The sequence spans 417 residues: uncharacterized protein (417 aa).

4 consecutive transmembrane segments (helical) span residues Leu87–Ile107, Ile130–Val150, Phe177–Ala197, and Ile202–Asp222. A compositionally biased stretch (low complexity) spans Ala366 to Thr398. The disordered stretch occupies residues Ala366–Trp417.

The protein belongs to the YccS/YhfK family.

It is found in the cell membrane. This is an uncharacterized protein from Neisseria gonorrhoeae.